The chain runs to 199 residues: Phycocyanobilin lyase CpcT (199 aa).

It belongs to the CpcT/CpeT biliprotein lyase family.

In terms of biological role, catalyzes the site-selective attachment of phycocyanobilin (PCB) to 'Cys-154' of C-phycocyanin subunit beta (CpcB) and to 'Cys-153' of phycoerythrocyanin subunit beta (PecB). Does not have chromophore lyase activity for ApcA1, ApcA2, ApcB, ApcD, ApcF or PecA. This Nostoc sp. (strain PCC 7120 / SAG 25.82 / UTEX 2576) protein is Phycocyanobilin lyase CpcT (cpcT1).